A 175-amino-acid chain; its full sequence is Large ribosomal subunit protein uL10 (175 aa).

It belongs to the universal ribosomal protein uL10 family. As to quaternary structure, part of the ribosomal stalk of the 50S ribosomal subunit. The N-terminus interacts with L11 and the large rRNA to form the base of the stalk. The C-terminus forms an elongated spine to which L12 dimers bind in a sequential fashion forming a multimeric L10(L12)X complex.

Functionally, forms part of the ribosomal stalk, playing a central role in the interaction of the ribosome with GTP-bound translation factors. In Methylobacterium sp. (strain 4-46), this protein is Large ribosomal subunit protein uL10.